The primary structure comprises 126 residues: Large ribosomal subunit protein uL22 (126 aa).

It belongs to the universal ribosomal protein uL22 family. As to quaternary structure, part of the 50S ribosomal subunit.

In terms of biological role, this protein binds specifically to 23S rRNA; its binding is stimulated by other ribosomal proteins, e.g. L4, L17, and L20. It is important during the early stages of 50S assembly. It makes multiple contacts with different domains of the 23S rRNA in the assembled 50S subunit and ribosome. Its function is as follows. The globular domain of the protein is located near the polypeptide exit tunnel on the outside of the subunit, while an extended beta-hairpin is found that lines the wall of the exit tunnel in the center of the 70S ribosome. The polypeptide is Large ribosomal subunit protein uL22 (Dinoroseobacter shibae (strain DSM 16493 / NCIMB 14021 / DFL 12)).